The chain runs to 268 residues: Ribosomal RNA small subunit methyltransferase A (268 aa).

6 residues coordinate S-adenosyl-L-methionine: asparagine 18, leucine 20, glycine 45, glutamate 66, aspartate 91, and asparagine 112.

Belongs to the class I-like SAM-binding methyltransferase superfamily. rRNA adenine N(6)-methyltransferase family. RsmA subfamily.

The protein resides in the cytoplasm. The catalysed reaction is adenosine(1518)/adenosine(1519) in 16S rRNA + 4 S-adenosyl-L-methionine = N(6)-dimethyladenosine(1518)/N(6)-dimethyladenosine(1519) in 16S rRNA + 4 S-adenosyl-L-homocysteine + 4 H(+). In terms of biological role, specifically dimethylates two adjacent adenosines (A1518 and A1519) in the loop of a conserved hairpin near the 3'-end of 16S rRNA in the 30S particle. May play a critical role in biogenesis of 30S subunits. This chain is Ribosomal RNA small subunit methyltransferase A, found in Shewanella frigidimarina (strain NCIMB 400).